The following is a 1191-amino-acid chain: Zinc finger protein ush (1191 aa).

Disordered regions lie at residues 1 to 153 (MLSS…PKYP) and 169 to 194 (PDAK…DTQA). The segment covering 19 to 28 (VDSRDSKDLS) has biased composition (basic and acidic residues). Acidic residues predominate over residues 61–73 (IDDDADEDAEFEE). Residues S116 and S118 each carry the phosphoserine modification. Positions 130-151 (ATPPSEPEASPCPSPSPCPTPK) are enriched in pro residues. Residues 202 to 235 (LLKPARFMCLPCGIAFSSPSTLEAHQAYYCSHRI) form a CCHC FOG-type 1 zinc finger. Zn(2+)-binding residues include C210, C213, H226, and C231. The segment at 239-274 (DEAGSDKSGAGGSGATAGDAAGLTGGSTEPPAKMAR) is disordered. Low complexity predominate over residues 254–266 (TAGDAAGLTGGST). The segment at 279-301 (YGCTQCSYSADKKVSLNRHMRMH) adopts a C2H2-type 1 zinc-finger fold. A disordered region spans residues 304-338 (SPAAPTLAGLPSLLQNGIAPPGVTPNPMEDSSSQQ). A CCHC FOG-type 2 zinc finger spans residues 335–368 (SSQQTDRYCSHCDIRFNNIKTYRAHKQHYCSSRR). Zn(2+) is bound by residues C343, C346, H359, and C364. Disordered stretches follow at residues 361–413 (QHYC…ARNK), 504–540 (EPER…ESAP), and 601–635 (APSL…MSPP). Gly residues predominate over residues 383-394 (AGSGPGSAGGSI). 3 stretches are compositionally biased toward low complexity: residues 509 to 523 (SAPS…AKSS), 602 to 613 (PSLPSSPSMSPS), and 620 to 635 (SPRS…MSPP). CCHC FOG-type zinc fingers lie at residues 720-753 (YVKK…SARS) and 791-824 (PVAY…PKGG). Residues C728, C731, H744, C749, C799, C802, H815, and C820 each contribute to the Zn(2+) site. 3 C2H2-type zinc fingers span residues 882-907 (NKCP…HGTV), 910-932 (YRCS…IRTH), and 983-1006 (FNCD…KLMH). The tract at residues 1011–1073 (INSPSISPDT…HENNNSPIAT (63 aa)) is disordered. Phosphoserine occurs at positions 1013, 1015, and 1017. Residues 1025–1040 (VTSNPTTNQHSNSDVS) are compositionally biased toward polar residues. The CCHC FOG-type 5 zinc finger occupies 1113–1146 (AAEVMKKYCSTCDISFNYVKTYLAHKQFYCKNKP). C1121, C1124, H1137, and C1142 together coordinate Zn(2+). S1156 is modified (phosphoserine).

The protein belongs to the FOG (Friend of GATA) family. In terms of assembly, interacts with pnr, although weak this interaction is essential. Interacts with the isoform SrpNC of srp. Interacts with CtBP corepressor. As to expression, first expressed in stage 5 at high levels in the primordium of the amnioserosa. Also expressed in germ band extending embryos in cells of the developing anterior and posterior midgut and in hemocyte precursors present in the cephalic mesoderm. In embryonic stage 8, it is expressed in blood cell precursors. By stage 10, it is expressed in hemocyte precursors that have spread throughout the lateral and ventral head mesoderm. By stage 11, it is expressed in the dorsal ectoderm and in precursor cells of the hemocytes and fat body. As embryogenesis proceeds, it is also expressed in stage 13 plasmatocytes migrating throughout the head mesoderm and down the ventral midline. By late embryogenesis, expression strongly decreases but remains in the dorsal ectoderm during dorsal closure, in cells within, or associated with, the central nervous system, and in plasmatocytes circulating throughout the embryonic hemolymph. During larval development, it is expressed in primary and secondary lobes of lymph glands. Expressed in the dorsal part of the thoracic imaginal disk.

The protein localises to the nucleus. In terms of biological role, transcription regulator that modulates expression mediated by transcription factors of the GATA family such as pnr and srp. Represses transcription of proneural achaete-scute complex (AS-C), which is usually activated by pnr. Involved in cardiogenesis, blood, and eye development. During hematopoiesis, it is required to restrict the number of crystal cells, probably via its interaction with the isoform SrpNC of srp. Negatively regulates expression of sr. Probably acts by interacting with the GATA-type zinc finger of proteins such as pnr and srp, possibly antagonizing the interaction between the GATA-type zinc finger and some cofactor. This Drosophila melanogaster (Fruit fly) protein is Zinc finger protein ush (ush).